Here is a 184-residue protein sequence, read N- to C-terminus: Photosystem I assembly protein Ycf4 (184 aa).

Helical transmembrane passes span 22 to 42 (FCWA…GTSS) and 57 to 77 (IIFF…LFIS).

This sequence belongs to the Ycf4 family.

Its subcellular location is the plastid. It localises to the chloroplast thylakoid membrane. Its function is as follows. Seems to be required for the assembly of the photosystem I complex. This chain is Photosystem I assembly protein Ycf4, found in Capsella bursa-pastoris (Shepherd's purse).